Here is a 108-residue protein sequence, read N- to C-terminus: UPF0060 membrane protein BLi00854/BL03049 (108 aa).

4 helical membrane passes run 3-23 (IAIG…YLVW), 31-51 (PLWY…IPAF), 60-80 (VYAA…WLVD), and 86-106 (LYDW…LWAP).

The protein belongs to the UPF0060 family.

The protein resides in the cell membrane. The protein is UPF0060 membrane protein BLi00854/BL03049 of Bacillus licheniformis (strain ATCC 14580 / DSM 13 / JCM 2505 / CCUG 7422 / NBRC 12200 / NCIMB 9375 / NCTC 10341 / NRRL NRS-1264 / Gibson 46).